Reading from the N-terminus, the 116-residue chain is NADH-ubiquinone oxidoreductase chain 3 (116 aa).

The next 3 membrane-spanning stretches (helical) occupy residues 3 to 23, 56 to 76, and 87 to 107; these read LIMT…TVSF, FFLV…LLPL, and GTFF…IYEW.

Belongs to the complex I subunit 3 family.

Its subcellular location is the mitochondrion membrane. The catalysed reaction is a ubiquinone + NADH + 5 H(+)(in) = a ubiquinol + NAD(+) + 4 H(+)(out). Core subunit of the mitochondrial membrane respiratory chain NADH dehydrogenase (Complex I) that is believed to belong to the minimal assembly required for catalysis. Complex I functions in the transfer of electrons from NADH to the respiratory chain. The immediate electron acceptor for the enzyme is believed to be ubiquinone. This chain is NADH-ubiquinone oxidoreductase chain 3 (MT-ND3), found in Cyprinus carpio (Common carp).